We begin with the raw amino-acid sequence, 98 residues long: NADH-ubiquinone oxidoreductase chain 4L (98 aa).

A run of 3 helical transmembrane segments spans residues 1–21, 29–49, and 59–79; these read MSIV…GTLL, SLMC…LISL, and VPLI…ALLV.

It belongs to the complex I subunit 4L family. As to quaternary structure, core subunit of respiratory chain NADH dehydrogenase (Complex I) which is composed of 45 different subunits.

The protein localises to the mitochondrion inner membrane. The catalysed reaction is a ubiquinone + NADH + 5 H(+)(in) = a ubiquinol + NAD(+) + 4 H(+)(out). Its function is as follows. Core subunit of the mitochondrial membrane respiratory chain NADH dehydrogenase (Complex I) which catalyzes electron transfer from NADH through the respiratory chain, using ubiquinone as an electron acceptor. Part of the enzyme membrane arm which is embedded in the lipid bilayer and involved in proton translocation. The sequence is that of NADH-ubiquinone oxidoreductase chain 4L (MT-ND4L) from Hemiechinus auritus (Long-eared hedgehog).